The sequence spans 744 residues: Scytalone dehydratase-like protein Arp1 (744 aa).

Residue tyrosine 621 coordinates substrate. Catalysis depends on residues histidine 656 and histidine 681. Asparagine 702 is a substrate binding site.

Belongs to the scytalone dehydratase family. Homotrimer. Each subunit contains an active site, located in the central part of the hydrophobic core of the monomer, which functions independently.

Its function is as follows. Scytalone dehydratase-like protein; part of the Pks2 gene cluster that mediates the formation of infectious structures (appressoria), enabling these fungi to kill insects faster. The product of the Pks2 gene cluster is different from the one of Pks1 and has still not been identified. The chain is Scytalone dehydratase-like protein Arp1 from Metarhizium brunneum (strain ARSEF 3297).